A 343-amino-acid chain; its full sequence is Methionine import ATP-binding protein MetN (343 aa).

An ABC transporter domain is found at 2–241; sequence IKLSNITKVF…PKTPLAQKFI (240 aa). 38 to 45 is an ATP binding site; sequence GASGAGKS.

This sequence belongs to the ABC transporter superfamily. Methionine importer (TC 3.A.1.24) family. As to quaternary structure, the complex is composed of two ATP-binding proteins (MetN), two transmembrane proteins (MetI) and a solute-binding protein (MetQ).

It localises to the cell inner membrane. The enzyme catalyses L-methionine(out) + ATP + H2O = L-methionine(in) + ADP + phosphate + H(+). It catalyses the reaction D-methionine(out) + ATP + H2O = D-methionine(in) + ADP + phosphate + H(+). In terms of biological role, part of the ABC transporter complex MetNIQ involved in methionine import. Responsible for energy coupling to the transport system. The sequence is that of Methionine import ATP-binding protein MetN from Shigella flexneri serotype 5b (strain 8401).